The sequence spans 352 residues: Rhodopsin, deep-sea form (352 aa).

At 1–36 (MNGTEGPNFYIPMSNITGVVRSPFEYPQYYLAEPWA) the chain is on the extracellular side. N-linked (GlcNAc...) asparagine glycans are attached at residues N2 and N15. Residues 37 to 61 (YTILAAYMFTLILLGFPVNFLTLYV) traverse the membrane as a helical segment. The Cytoplasmic segment spans residues 62–73 (TIEHKKLRTPLN). Residues 74-98 (YILLNLAVANLFMVFGGFTTTVYTS) traverse the membrane as a helical segment. The Extracellular segment spans residues 99-113 (MHGYFVFGETGCNLE). A disulfide bridge links C110 with C187. The helical transmembrane segment at 114–133 (GYFATLGGEISLWSLVVLAI) threads the bilayer. Topologically, residues 134-152 (ERWVVVCKPMSNFRFGENH) are cytoplasmic. A helical membrane pass occupies residues 153-176 (AIMGLAFTWIMANSCAMPPLFGWS). Over 177-202 (RYIPEGMQCSCGVDYYTLKPEVNNES) the chain is Extracellular. A glycan (N-linked (GlcNAc...) asparagine) is linked at N200. The chain crosses the membrane as a helical span at residues 203 to 230 (FVIYMFIVHFSVPLTIISFCYGRLVCTV). At 231-252 (KEAAAQQQESETTQRAEREVTR) the chain is on the cytoplasmic side. A helical transmembrane segment spans residues 253–276 (MVVIMVIAFLVCWVPYASVAWYIF). The Extracellular portion of the chain corresponds to 277–284 (THQGSTFG). The chain crosses the membrane as a helical span at residues 285–309 (PVFMTVPSFFAKSSAIYNPLIYICL). N6-(retinylidene)lysine is present on K296. Over 310 to 352 (NSQFRNCMITTLFCGKNPFQEEEGASTTASKTEASSVSSVSPA) the chain is Cytoplasmic. C323 is lipidated: S-palmitoyl cysteine. Residues 333–352 (GASTTASKTEASSVSSVSPA) are disordered. Over residues 334 to 352 (ASTTASKTEASSVSSVSPA) the composition is skewed to low complexity.

Belongs to the G-protein coupled receptor 1 family. Opsin subfamily. Phosphorylated on some or all of the serine and threonine residues present in the C-terminal region. In terms of tissue distribution, rod shaped photoreceptor cells which mediates vision in dim light.

The protein resides in the membrane. In terms of biological role, visual pigments such as rhodopsin and porphyropsin are light-absorbing molecules that mediate vision. Rhodopsin consists of an apoprotein, opsin, covalently linked to 11-cis-retinal. This receptor is coupled to the activation of phospholipase C. Porphyropsin consists of opsin covalently linked to 11-cis 3,4-didehydroretinal. This Anguilla anguilla (European freshwater eel) protein is Rhodopsin, deep-sea form.